Here is a 462-residue protein sequence, read N- to C-terminus: 23S rRNA (uracil(1939)-C(5))-methyltransferase RlmD (462 aa).

Residues 6-76 (KSRKPQQPEY…KRLEEAEMVE (71 aa)) enclose the TRAM domain. The [4Fe-4S] cluster site is built by C90, C96, C99, and C178. S-adenosyl-L-methionine contacts are provided by Q287, F316, N321, E340, D367, and D388. Residue C414 is the Nucleophile of the active site.

It belongs to the class I-like SAM-binding methyltransferase superfamily. RNA M5U methyltransferase family. RlmD subfamily.

It carries out the reaction uridine(1939) in 23S rRNA + S-adenosyl-L-methionine = 5-methyluridine(1939) in 23S rRNA + S-adenosyl-L-homocysteine + H(+). Catalyzes the formation of 5-methyl-uridine at position 1939 (m5U1939) in 23S rRNA. The chain is 23S rRNA (uracil(1939)-C(5))-methyltransferase RlmD from Acinetobacter baumannii (strain AB0057).